Reading from the N-terminus, the 208-residue chain is High frequency lysogenization protein HflD homolog (208 aa).

Positions 91–125 form a coiled coil; that stretch reads LMVLERKLNANKQAMNQLGERLGQLERQLAHFDLE.

Belongs to the HflD family.

Its subcellular location is the cytoplasm. It is found in the cell inner membrane. This chain is High frequency lysogenization protein HflD homolog, found in Serratia proteamaculans (strain 568).